Consider the following 234-residue polypeptide: MHIPKSLQELANSEAVQFLRRPKTITRVFEGVFSLIVFSSLLTDGYQNKMESPQLHCILNSNSVACSFAVGAGFLAFLSCLAFLVLDTQETRIAGTRFKTAFQLLDFILAVLWAVVWFMGFCFLANQWQHSPPKEFLLGSSSAQAAIAFTFFSILVWIFQAYLAFQDLRNDAPVPYKRFLDEGGMVLTTLPLPSANSPVNMPTTGPNSLSYASSALSPCLTAPKSPRLAMMPDN.

Positions 18–169 constitute an MARVEL domain; that stretch reads FLRRPKTITR…QAYLAFQDLR (152 aa). 4 helical membrane-spanning segments follow: residues 25–45, 66–86, 104–124, and 145–165; these read ITRV…LTDG, CSFA…FLVL, LLDF…FCFL, and AAIA…YLAF.

It belongs to the synaptogyrin family.

Its subcellular location is the membrane. This chain is Synaptogyrin-4 (SYNGR4), found in Homo sapiens (Human).